We begin with the raw amino-acid sequence, 359 residues long: 3-dehydroquinate synthase (359 aa).

NAD(+) contacts are provided by residues D69 to K74, G103 to D107, T127 to T128, K140, K149, and T167 to T170. Residues E182, H245, and H262 each contribute to the Zn(2+) site.

This sequence belongs to the sugar phosphate cyclases superfamily. Dehydroquinate synthase family. Co(2+) is required as a cofactor. Requires Zn(2+) as cofactor. NAD(+) serves as cofactor.

It localises to the cytoplasm. The catalysed reaction is 7-phospho-2-dehydro-3-deoxy-D-arabino-heptonate = 3-dehydroquinate + phosphate. Its pathway is metabolic intermediate biosynthesis; chorismate biosynthesis; chorismate from D-erythrose 4-phosphate and phosphoenolpyruvate: step 2/7. Its function is as follows. Catalyzes the conversion of 3-deoxy-D-arabino-heptulosonate 7-phosphate (DAHP) to dehydroquinate (DHQ). The sequence is that of 3-dehydroquinate synthase from Nitrosococcus oceani (strain ATCC 19707 / BCRC 17464 / JCM 30415 / NCIMB 11848 / C-107).